We begin with the raw amino-acid sequence, 412 residues long: Divalent metal cation transporter MntH (412 aa).

The next 11 membrane-spanning stretches (helical) occupy residues 19–39, 46–66, 94–114, 122–142, 155–175, 196–216, 241–261, 290–310, 329–349, 350–370, and 389–409; these read FALM…GNFA, ASFG…AMLI, VWFY…AEFI, LILG…TFLI, LVIG…LVFS, AVFL…IYLH, IAMT…AAAF, IFGL…TLAG, SVTM…TRIL, VMSQ…LLIF, and IGWM…IGTL.

It belongs to the NRAMP family.

It is found in the cell inner membrane. Functionally, h(+)-stimulated, divalent metal cation uptake system. This is Divalent metal cation transporter MntH from Enterobacter sp. (strain 638).